The chain runs to 273 residues: Nickel import ATP-binding protein NikE (273 aa).

An ABC transporter domain is found at 13 to 252; it reads YRTGGLLRKR…AHPVGRQLQA (240 aa). 45–52 lines the ATP pocket; it reads GSSGSGKS.

Belongs to the ABC transporter superfamily. Nickel importer (TC 3.A.1.5.3) family. The complex is composed of two ATP-binding proteins (NikD and NikE), two transmembrane proteins (NikB and NikC) and a solute-binding protein (NikA).

The protein resides in the cell inner membrane. It catalyses the reaction Ni(2+)(out) + ATP + H2O = Ni(2+)(in) + ADP + phosphate + H(+). Functionally, part of the ABC transporter complex NikABCDE involved in nickel import. Responsible for energy coupling to the transport system. The chain is Nickel import ATP-binding protein NikE from Pseudomonas putida (strain ATCC 47054 / DSM 6125 / CFBP 8728 / NCIMB 11950 / KT2440).